A 375-amino-acid chain; its full sequence is Chaperone protein DnaJ (375 aa).

The J domain maps to 5–70 (DFYEVLGVEK…QKRAQYDQFG (66 aa)). Residues 134-216 (GVEKEVSITK…CKGKGTVRKQ (83 aa)) form a CR-type zinc finger. Zn(2+)-binding residues include Cys147, Cys150, Cys164, Cys167, Cys190, Cys193, Cys204, and Cys207. CXXCXGXG motif repeat units lie at residues 147-154 (CETCTGTG), 164-171 (CPKCNGSG), 190-197 (CDMCGGKG), and 204-211 (CSDCKGKG).

Belongs to the DnaJ family. Homodimer. Zn(2+) is required as a cofactor.

It localises to the cytoplasm. In terms of biological role, participates actively in the response to hyperosmotic and heat shock by preventing the aggregation of stress-denatured proteins and by disaggregating proteins, also in an autonomous, DnaK-independent fashion. Unfolded proteins bind initially to DnaJ; upon interaction with the DnaJ-bound protein, DnaK hydrolyzes its bound ATP, resulting in the formation of a stable complex. GrpE releases ADP from DnaK; ATP binding to DnaK triggers the release of the substrate protein, thus completing the reaction cycle. Several rounds of ATP-dependent interactions between DnaJ, DnaK and GrpE are required for fully efficient folding. Also involved, together with DnaK and GrpE, in the DNA replication of plasmids through activation of initiation proteins. This is Chaperone protein DnaJ from Clostridium tetani (strain Massachusetts / E88).